We begin with the raw amino-acid sequence, 103 residues long: Matrix Gla protein (103 aa).

Residues 1-19 form the signal peptide; it reads MKSLILLAILAALAVVTLC. The residue at position 21 (E21) is a 4-carboxyglutamate. Phosphoserine is present on residues S22, S25, and S28. The Gla domain occupies 51 to 97; it reads RAKVQERIRERSKPVHELNREACDDYRLCERYAMVYGYNAAYNRYFR. 4 positions are modified to 4-carboxyglutamate: E56, E60, E67, and E71. A disulfide bond links C73 and C79. A propeptide spans 97-103 (removed in mature form; probably by carboxypeptidase N); the sequence is RKRRGTK.

Belongs to the osteocalcin/matrix Gla protein family. Post-translationally, requires vitamin K-dependent gamma-carboxylation for its function.

It localises to the secreted. In terms of biological role, associates with the organic matrix of bone and cartilage. Thought to act as an inhibitor of bone formation. In Homo sapiens (Human), this protein is Matrix Gla protein (MGP).